Reading from the N-terminus, the 360-residue chain is D-alanine--D-alanine ligase (360 aa).

An ATP-grasp domain is found at 146–352 (KICAEHAGLH…FSQLIDRLLQ (207 aa)). 179–234 (LEEFTLPFFVKPASQGSSIGITKVHRPEELAAALEKAFMVDTKVLIEKTIEGREIE) provides a ligand contact to ATP. Residues Asp-305, Glu-319, and Asn-321 each contribute to the Mg(2+) site.

Belongs to the D-alanine--D-alanine ligase family. The cofactor is Mg(2+). It depends on Mn(2+) as a cofactor.

The protein resides in the cytoplasm. It catalyses the reaction 2 D-alanine + ATP = D-alanyl-D-alanine + ADP + phosphate + H(+). It participates in cell wall biogenesis; peptidoglycan biosynthesis. In terms of biological role, cell wall formation. This chain is D-alanine--D-alanine ligase, found in Prosthecochloris aestuarii (strain DSM 271 / SK 413).